We begin with the raw amino-acid sequence, 116 residues long: Ferredoxin-thioredoxin reductase, catalytic chain (116 aa).

A [4Fe-4S] cluster-binding site is contributed by cysteine 57. The active-site Nucleophile is the cysteine 59. The cysteines at positions 59 and 89 are disulfide-linked. [4Fe-4S] cluster contacts are provided by cysteine 76, cysteine 78, and cysteine 87.

Belongs to the ferredoxin thioredoxin reductase beta subunit family. In terms of assembly, heterodimer of subunit A (variable subunit) and subunit B (catalytic subunit). Heterodimeric FTR forms a complex with ferredoxin and thioredoxin. [4Fe-4S] cluster serves as cofactor.

The protein localises to the plastid. It is found in the chloroplast. The catalysed reaction is [thioredoxin]-disulfide + 2 reduced [2Fe-2S]-[ferredoxin] + 2 H(+) = [thioredoxin]-dithiol + 2 oxidized [2Fe-2S]-[ferredoxin]. Functionally, catalytic subunit of the ferredoxin-thioredoxin reductase (FTR), which catalyzes the two-electron reduction of thioredoxins by the electrons provided by reduced ferredoxin. This is Ferredoxin-thioredoxin reductase, catalytic chain (ftrB) from Pyropia yezoensis (Susabi-nori).